The sequence spans 884 residues: Probable DNA-directed RNA polymerase subunit beta (884 aa).

The protein belongs to the RNA polymerase beta chain family.

The catalysed reaction is RNA(n) + a ribonucleoside 5'-triphosphate = RNA(n+1) + diphosphate. Functionally, required for late and very late gene expression. May be a component of the novel RNA polymerase activity induced by baculovirus infection. In Orgyia pseudotsugata multicapsid polyhedrosis virus (OpMNPV), this protein is Probable DNA-directed RNA polymerase subunit beta (LEF-8).